The chain runs to 178 residues: ATP synthase subunit delta (178 aa).

The protein belongs to the ATPase delta chain family. As to quaternary structure, F-type ATPases have 2 components, F(1) - the catalytic core - and F(0) - the membrane proton channel. F(1) has five subunits: alpha(3), beta(3), gamma(1), delta(1), epsilon(1). F(0) has three main subunits: a(1), b(2) and c(10-14). The alpha and beta chains form an alternating ring which encloses part of the gamma chain. F(1) is attached to F(0) by a central stalk formed by the gamma and epsilon chains, while a peripheral stalk is formed by the delta and b chains.

The protein localises to the cell membrane. F(1)F(0) ATP synthase produces ATP from ADP in the presence of a proton or sodium gradient. F-type ATPases consist of two structural domains, F(1) containing the extramembraneous catalytic core and F(0) containing the membrane proton channel, linked together by a central stalk and a peripheral stalk. During catalysis, ATP synthesis in the catalytic domain of F(1) is coupled via a rotary mechanism of the central stalk subunits to proton translocation. In terms of biological role, this protein is part of the stalk that links CF(0) to CF(1). It either transmits conformational changes from CF(0) to CF(1) or is implicated in proton conduction. This is ATP synthase subunit delta from Streptococcus gordonii (strain Challis / ATCC 35105 / BCRC 15272 / CH1 / DL1 / V288).